A 614-amino-acid chain; its full sequence is Vitamin B12 transporter BtuB (614 aa).

The first 20 residues, 1 to 20 (MIKKASLLTACSVTAFSAWA), serve as a signal peptide directing secretion. The TonB box motif lies at 26-33 (DTLVVTAN). The region spanning 38–152 (PRSTVLAPTT…IGGVVNIITT (115 aa)) is the TBDR plug domain. Cyanocob(III)alamin-binding positions include Leu83, Ser85, Asn92, and 110-111 (VS). In terms of domain architecture, TBDR beta-barrel spans 155–614 (HPGTEISAGW…EYTLSGSYTF (460 aa)). The next 3 membrane-spanning stretches (beta stranded) occupy residues 158–165 (TEISAGWG), 169–178 (YQNYDVSTQQ), and 184–195 (TRVTLLGDYAHT). Ca(2+)-binding residues include Asp199, Gln211, Asp213, and Asp215. Transmembrane regions (beta stranded) follow at residues 217–227 (FLSKTLYGALE) and 232–248 (DVWSGFVRGYGYDNRTN). Residues Tyr249 and Asp250 each coordinate Ca(2+). A cyanocob(III)alamin-binding site is contributed by Ala251. A Ca(2+)-binding site is contributed by Asp261. 14 beta stranded membrane passes run 263–277 (RKLYSQSWDAGLRYN), 279–296 (ELIKSQLITSYSHSKDYN), 309–325 (TLDEMKQYTVQWANNII), 328–337 (HGNIGAGVDW), 353–369 (YDQRNTGIYLTGLQQVG), 371–381 (FTFEGAGRSDD), 385–400 (FGRHGTWQTSAGWEFI), 403–417 (YRFIASYGTSYKAPN), 434–443 (KSKQWEGAFE), 449–458 (VNWRISGYRN), 473–490 (YYNEGKARIKGVEATANF), 494–509 (PLTHTVSYDYVDARNA), 517–529 (RRAKQQVKYQLDW), and 535–550 (DWGITYQYLGTRYDKD). Thr309 lines the cyanocob(III)alamin pocket. Cyanocob(III)alamin is bound at residue Arg517. Tyr551 is a cyanocob(III)alamin binding site. The next 3 membrane-spanning stretches (beta stranded) occupy residues 558–572 (TVKMGGVSLWDLAVA), 585–596 (IANLFDKDYETV), and 602–614 (AGREYTLSGSYTF). The TonB C-terminal box motif lies at 597-614 (YGYQTAGREYTLSGSYTF).

It belongs to the TonB-dependent receptor family. BtuB (TC 1.B.14.3.1) subfamily.

It localises to the cell outer membrane. Functionally, involved in the active translocation of vitamin B12 (cyanocobalamin) across the outer membrane to the periplasmic space. It derives its energy for transport by interacting with the trans-periplasmic membrane protein TonB. This is Vitamin B12 transporter BtuB from Escherichia coli O1:K1 / APEC.